The sequence spans 350 residues: Ribosomal RNA large subunit methyltransferase M (350 aa).

Residues 217-220, aspartate 236, aspartate 256, and aspartate 272 contribute to the S-adenosyl-L-methionine site; that span reads APGG. Catalysis depends on lysine 301, which acts as the Proton acceptor.

It belongs to the class I-like SAM-binding methyltransferase superfamily. RNA methyltransferase RlmE family. RlmM subfamily. Monomer.

It localises to the cytoplasm. It catalyses the reaction cytidine(2498) in 23S rRNA + S-adenosyl-L-methionine = 2'-O-methylcytidine(2498) in 23S rRNA + S-adenosyl-L-homocysteine + H(+). In terms of biological role, catalyzes the 2'-O-methylation at nucleotide C2498 in 23S rRNA. This chain is Ribosomal RNA large subunit methyltransferase M, found in Cellvibrio japonicus (strain Ueda107) (Pseudomonas fluorescens subsp. cellulosa).